Consider the following 88-residue polypeptide: Small ribosomal subunit protein bS20 (88 aa).

A disordered region spans residues 1 to 25 (MANSPQAKKRARQNERRAEVNKARR). A compositionally biased stretch (basic and acidic residues) spans 12–22 (RQNERRAEVNK).

The protein belongs to the bacterial ribosomal protein bS20 family.

Its function is as follows. Binds directly to 16S ribosomal RNA. This is Small ribosomal subunit protein bS20 from Dinoroseobacter shibae (strain DSM 16493 / NCIMB 14021 / DFL 12).